The following is a 118-amino-acid chain: Large ribosomal subunit protein bL19 (118 aa).

The protein belongs to the bacterial ribosomal protein bL19 family.

This protein is located at the 30S-50S ribosomal subunit interface and may play a role in the structure and function of the aminoacyl-tRNA binding site. The polypeptide is Large ribosomal subunit protein bL19 (Aliarcobacter butzleri (strain RM4018) (Arcobacter butzleri)).